The following is a 342-amino-acid chain: S-adenosylmethionine:tRNA ribosyltransferase-isomerase (342 aa).

It belongs to the QueA family. Monomer.

It is found in the cytoplasm. The catalysed reaction is 7-aminomethyl-7-carbaguanosine(34) in tRNA + S-adenosyl-L-methionine = epoxyqueuosine(34) in tRNA + adenine + L-methionine + 2 H(+). It functions in the pathway tRNA modification; tRNA-queuosine biosynthesis. In terms of biological role, transfers and isomerizes the ribose moiety from AdoMet to the 7-aminomethyl group of 7-deazaguanine (preQ1-tRNA) to give epoxyqueuosine (oQ-tRNA). This chain is S-adenosylmethionine:tRNA ribosyltransferase-isomerase, found in Bacillus subtilis (strain 168).